Here is a 340-residue protein sequence, read N- to C-terminus: Flap endonuclease 1 (340 aa).

The segment at 1–98 is N-domain; it reads MGVDLGGLVE…ETIKARAEVR (98 aa). The Mg(2+) site is built by Asp27, Asp80, Glu151, Glu153, Asp172, Asp174, and Asp235. The segment at 115–256 is I-domain; that stretch reads EAYKYAQAST…TALKLVKKHG (142 aa). An interaction with PCNA region spans residues 332 to 340; it reads KQKTLSSWF.

It belongs to the XPG/RAD2 endonuclease family. FEN1 subfamily. As to quaternary structure, interacts with PCNA. PCNA stimulates the nuclease activity without altering cleavage specificity. It depends on Mg(2+) as a cofactor.

Structure-specific nuclease with 5'-flap endonuclease and 5'-3' exonuclease activities involved in DNA replication and repair. During DNA replication, cleaves the 5'-overhanging flap structure that is generated by displacement synthesis when DNA polymerase encounters the 5'-end of a downstream Okazaki fragment. Binds the unpaired 3'-DNA end and kinks the DNA to facilitate 5' cleavage specificity. Cleaves one nucleotide into the double-stranded DNA from the junction in flap DNA, leaving a nick for ligation. Also involved in the base excision repair (BER) pathway. Acts as a genome stabilization factor that prevents flaps from equilibrating into structures that lead to duplications and deletions. Also possesses 5'-3' exonuclease activity on nicked or gapped double-stranded DNA. The polypeptide is Flap endonuclease 1 (Methanocella arvoryzae (strain DSM 22066 / NBRC 105507 / MRE50)).